The sequence spans 310 residues: Ribosomal RNA small subunit methyltransferase H (310 aa).

Residues 33–35, D53, F79, D100, and Q107 each bind S-adenosyl-L-methionine; that span reads AGH.

Belongs to the methyltransferase superfamily. RsmH family.

Its subcellular location is the cytoplasm. The enzyme catalyses cytidine(1402) in 16S rRNA + S-adenosyl-L-methionine = N(4)-methylcytidine(1402) in 16S rRNA + S-adenosyl-L-homocysteine + H(+). Specifically methylates the N4 position of cytidine in position 1402 (C1402) of 16S rRNA. The chain is Ribosomal RNA small subunit methyltransferase H from Clostridium botulinum (strain Alaska E43 / Type E3).